The sequence spans 749 residues: MAEELVPEVLVAWPTRDYIRRPITGVFEFSQSSWPFSSRCVGELVGIFLPVMIAILPLPPQITQYFPHQLVSVLQWFAFWAFSALLIIPWLFCVNRFVIHSLGRTKRVKEALDDRTAPKTVIVMPVYKEDPVVLIKAIDSVVNSDYPSYCIHVFLSYDGCNIDEPYLQVINHLGIPISLESYPQSIDVTYQGARITVSRFKHGGKRHCQKQTFRLIDKVYADYLKHHDDLFLLFIDSDCILDKLCLQNFMYDMELKPGSQHNMLAMTGIITSTTERNSLITVLQDMEYIHGQLVERTVESGCGAVTCLPGALTILRFSAFRKMARYYFADKAEQCEDLFDYGKCHLGEDRWLTHLFMIGAIERYQIQMCTSAFCKTEAVQTFCSLLKQRRRWFLGYITNEVCMLTDVRLWKRYPLLCLVRFMQNTIRTTALLFFILAISIITTSSKIKNLPVGFIAVSLGLNYILMVYFGIRLKRFKAWLYPLMFILNPFFNWLYIVYGIFTAGQRTWGGPRADAAKADEHTTPEEAVEKARVQGDELNVQVDTFRTKTEEKGVPIRPSSKVNGRLSFAPQLPDRYYDYQGALGTSLAKYLTPLPDVPRIGLHPHCSSDSVATSDSGGNSISLPQHVETLMSAEERAKLYIGSQAQESTGLLHTQEADGGERGLDVQSNEDLEDNRAYEMHTIESGSGIPSGKAPVLSSSVPQSGMQQSRAVPGNMSQPHEHLPQPKYTKRPSRIPRQKRRYMQPEQMV.

5 helical membrane passes run 40-60 (CVGELVGIFLPVMIAILPLPP), 73-93 (VLQWFAFWAFSALLIIPWLFC), 421-441 (FMQNTIRTTALLFFILAISII), 451-471 (PVGFIAVSLGLNYILMVYFGI), and 483-503 (LMFILNPFFNWLYIVYGIFTA). The tract at residues 683 to 749 (IESGSGIPSG…RRYMQPEQMV (67 aa)) is disordered. Polar residues predominate over residues 697–718 (LSSSVPQSGMQQSRAVPGNMSQ). Residue N715 is glycosylated (N-linked (GlcNAc...) asparagine). A compositionally biased stretch (basic residues) spans 728-742 (YTKRPSRIPRQKRRY).

This sequence belongs to the chitin synthase family. Class VI subfamily.

The protein localises to the cell membrane. It catalyses the reaction [(1-&gt;4)-N-acetyl-beta-D-glucosaminyl](n) + UDP-N-acetyl-alpha-D-glucosamine = [(1-&gt;4)-N-acetyl-beta-D-glucosaminyl](n+1) + UDP + H(+). Polymerizes chitin, a structural polymer of the cell wall and septum, by transferring the sugar moiety of UDP-GlcNAc to the non-reducing end of the growing chitin polymer. Plays an important role in septal growth or maintenance. Mediates colony spore formation. The sequence is that of Chitin synthase G from Aspergillus niger (strain ATCC MYA-4892 / CBS 513.88 / FGSC A1513).